A 462-amino-acid chain; its full sequence is Probable protein phosphatase 2C 1 (462 aa).

The PPM-type phosphatase domain maps to serine 60 to leucine 362. Aspartate 95, glycine 96, aspartate 307, and aspartate 353 together coordinate Mn(2+). 2 disordered regions span residues glutamate 369 to glutamate 394 and glutamate 421 to valine 443. Residues glutamine 376–valine 385 are compositionally biased toward polar residues. Over residues asparagine 424–glutamate 434 the composition is skewed to basic and acidic residues.

This sequence belongs to the PP2C family. In terms of assembly, interacts with GCN5. Mg(2+) serves as cofactor. The cofactor is Mn(2+).

It catalyses the reaction O-phospho-L-seryl-[protein] + H2O = L-seryl-[protein] + phosphate. The enzyme catalyses O-phospho-L-threonyl-[protein] + H2O = L-threonyl-[protein] + phosphate. In terms of biological role, may act as negative regulator of GCN5. The sequence is that of Probable protein phosphatase 2C 1 (PPC6-6) from Arabidopsis thaliana (Mouse-ear cress).